Reading from the N-terminus, the 356-residue chain is MADAAVIEKLEAGFKKLEAATDCKSLLKKYLTKEVFDKLKDKKTSLGATLLDVIQSGVENLDSGVGIYAPDAEAYTLFAPLFDPIIEDYHVGFKQTDKHPNKDFGDVNSFVNVDPEGKFVISTRVRCGRSMQGYPFNPCLTESQYKEMEAKVSSTLSSLEGELKGTYYPLTGMSKEVQQKLIDDHFLFKEGDRFLQAANACRYWPAGRGIYHNDNKTFLVWVNEEDHLRIISMQMGGDLGQVFRRLTSAVNEIEKRIPFSHHDRLGFLTFCPTNLGTTVRASVHIKLPKLAANREKLEEVAGKYNLQVRGTRGEHTEAEGGIYDISNKRRMGLTEFQAVKEMQDGILELIKMEKEM.

One can recognise a Phosphagen kinase N-terminal domain in the interval 9-91; sequence KLEAGFKKLE…FDPIIEDYHV (83 aa). Position 64 to 68 (64 to 68) interacts with L-arginine; it reads GVGIY. Positions 119–356 constitute a Phosphagen kinase C-terminal domain; it reads FVISTRVRCG…LELIKMEKEM (238 aa). ATP is bound by residues 122–126 and His-185; that span reads STRVR. Glu-225 is a binding site for L-arginine. Arg-229 contacts ATP. Cys-271 is an L-arginine binding site. Residues 280–284 and 309–314 contribute to the ATP site; these read RASVH and RGTRGE. Glu-314 is a binding site for L-arginine.

Belongs to the ATP:guanido phosphotransferase family. In terms of tissue distribution, expressed in muscle (at protein level). Expressed in muscle, heart, nerve, stomach and hemocytes, with the highest expression in muscle. Very low expression in eyestalk and intestine. Not expressed in hepatopancreas, gill and skin.

It carries out the reaction L-arginine + ATP = N(omega)-phospho-L-arginine + ADP + H(+). No change in activity after supplementation with 10 mM glucose. However, activity decreases significantly when glucose concentration is higher than 50 mM and almost all activity is lost with 200 mM glucose. Activity is significantly increased after treatment with 10 mM and 50 mM ATP. However, activity drops significantly with 200 mM ATP. Inhibited by 10-200 mM alpha-ketoglutarate. No change in activity after incubation with 10-200 mM L-citrulline, L-ornaline or glycerol. In terms of biological role, catalyzes the reversible transfer of high energy ATP gamma-phosphate group to L-arginine. The polypeptide is Arginine kinase Lit v 2 (Penaeus vannamei (Whiteleg shrimp)).